The sequence spans 425 residues: MSNNSRLPENGVQSGNGEDAELKKSMRIIEREIPDSLLEKIPEAEDYIALQDLERKLDSLIVRKRFDLQDSLSRNSHKTRILRMYIHSTVANQSWQQKGENQENNSGDINSLPIPEWTLHIEGRLLVNPDDEDDKAFELAPFTNFFRKIAIQILRSDDLYPSGNYVEWNKLPDNSNTSNGITVTRKGDQSVDVKIMLYPEEHPERYKLSKAFANILGIREGTRPDIVSYLWQYIKFHRLQDMEEKRLINCDKALRDLFEADRLYFPRIPELMNRFLEPIDPIVIPYTINVSEHTVEKVTIFDIRINTEDPRHSQIRSFLATMMSQDKIRSIDDKLTELIQAITYSQSKYDFMKKFSESPIEFINEWIESQSRDLEIVLDGTNMNYAEKRSADYYQQPWVHESAFHYLNLLNSKKQQSVLNASAKK.

Residues 1 to 16 (MSNNSRLPENGVQSGN) show a composition bias toward polar residues. The tract at residues 1 to 23 (MSNNSRLPENGVQSGNGEDAELK) is disordered. The region spanning 201-278 (EHPERYKLSK…PELMNRFLEP (78 aa)) is the SWIB/MDM2 domain.

Belongs to the SMARCD family. As to quaternary structure, component of the RSC complex composed of at least arp9, arp42, rsc1, rsc4, rsc7, rsc9, rsc58, sfh1, snf21, ssr1, ssr2, ssr3 and ssr4. The complex interacts with histone and histone variant components of centromeric chromatin. Component of the SWI/SNF global transcription activator complex composed of at least arp9, arp42, snf5, snf22, snf30, sbf59, sol1, ssr1, ssr2, ssr3, ssr4 and tfg3.

It is found in the cytoplasm. The protein localises to the nucleus. Functionally, component of the chromatin structure remodeling complex (RSC), which is involved in transcription regulation and nucleosome positioning. Controls particularly membrane and organelle development genes. Part of the SWI/SNF complex, an ATP-dependent chromatin remodeling complex, required for the positive and negative regulation of gene expression of a large number of genes. It changes chromatin structure by altering DNA-histone contacts within a nucleosome, leading eventually to a change in nucleosome position, thus facilitating or repressing binding of gene-specific transcription factors. In Schizosaccharomyces pombe (strain 972 / ATCC 24843) (Fission yeast), this protein is SWI/SNF and RSC complexes subunit ssr3 (ssr3).